Here is a 257-residue protein sequence, read N- to C-terminus: Acetylglutamate kinase (257 aa).

Residues 43–44, R65, and N157 contribute to the substrate site; that span reads GG. ATP contacts are provided by residues 180–185 and 208–210; these read DISGIL and IIT.

It belongs to the acetylglutamate kinase family. ArgB subfamily. As to quaternary structure, homodimer.

The protein localises to the cytoplasm. It catalyses the reaction N-acetyl-L-glutamate + ATP = N-acetyl-L-glutamyl 5-phosphate + ADP. It participates in amino-acid biosynthesis; L-arginine biosynthesis; N(2)-acetyl-L-ornithine from L-glutamate: step 2/4. Functionally, catalyzes the ATP-dependent phosphorylation of N-acetyl-L-glutamate. The polypeptide is Acetylglutamate kinase (Sodalis glossinidius (strain morsitans)).